The sequence spans 395 residues: Major capsid protein P3 (395 aa).

As to quaternary structure, homotrimer.

The protein localises to the virion. Its function is as follows. Major capsid protein self-assembles to form an icosahedral capsid with a pseudo T=25 symmetry, about 66 nm in diameter, and consisting of 240 capsid proteins trimers. The capsid encapsulates an inner membrane and the genomic dsDNA genome. The major coat protein P3 and two assembly factors (P10 and P17) are needed during the assembly of the virus particle inside the host cell, when the capsid protein multimers are capable of enclosing the host-derived membrane, containing the virus-encoded membrane-associated proteins. In Acinetobacter calcoaceticus (Arthrobacter siderocapsulatus), this protein is Major capsid protein P3 (III).